Here is a 449-residue protein sequence, read N- to C-terminus: Phosphoglucosamine mutase (449 aa).

Serine 101 serves as the catalytic Phosphoserine intermediate. Residues serine 101, aspartate 243, aspartate 245, and aspartate 247 each contribute to the Mg(2+) site. Serine 101 carries the phosphoserine modification.

The protein belongs to the phosphohexose mutase family. It depends on Mg(2+) as a cofactor. Activated by phosphorylation.

It catalyses the reaction alpha-D-glucosamine 1-phosphate = D-glucosamine 6-phosphate. Catalyzes the conversion of glucosamine-6-phosphate to glucosamine-1-phosphate. In Syntrophobacter fumaroxidans (strain DSM 10017 / MPOB), this protein is Phosphoglucosamine mutase.